A 212-amino-acid polypeptide reads, in one-letter code: Peroxisomal membrane protein 4 (212 aa).

N-linked (GlcNAc...) asparagine glycosylation is present at Asn57. A run of 2 helical transmembrane segments spans residues 97–117 and 153–173; these read GKTYPAHAFLAAFLGGILVFG and WDPFPLLTAVVWGLVLWLFEY. Asn206 carries N-linked (GlcNAc...) asparagine glycosylation.

This sequence belongs to the peroxisomal membrane protein PXMP2/4 family. In terms of assembly, interacts with PEX19. In terms of tissue distribution, expressed in normal prostate epithelial cells, and androgen-sensitive prostate adenocarcinoma cells. Not expressed in androgen-insensitive prostate adenocarcinoma cells.

Its subcellular location is the peroxisome membrane. In Homo sapiens (Human), this protein is Peroxisomal membrane protein 4 (PXMP4).